We begin with the raw amino-acid sequence, 190 residues long: Segregation and condensation protein B (190 aa).

It belongs to the ScpB family. Homodimer. Homodimerization may be required to stabilize the binding of ScpA to the Smc head domains. Component of a cohesin-like complex composed of ScpA, ScpB and the Smc homodimer, in which ScpA and ScpB bind to the head domain of Smc. The presence of the three proteins is required for the association of the complex with DNA.

Its subcellular location is the cytoplasm. Functionally, participates in chromosomal partition during cell division. May act via the formation of a condensin-like complex containing Smc and ScpA that pull DNA away from mid-cell into both cell halves. The protein is Segregation and condensation protein B of Ruminiclostridium cellulolyticum (strain ATCC 35319 / DSM 5812 / JCM 6584 / H10) (Clostridium cellulolyticum).